A 234-amino-acid polypeptide reads, in one-letter code: Enolase-phosphatase E1 (234 aa).

Mg(2+)-binding residues include Asp10 and Glu12. Residues 125 to 126 (SS) and Lys162 contribute to the substrate site. Asp188 is a Mg(2+) binding site.

Belongs to the HAD-like hydrolase superfamily. MasA/MtnC family. In terms of assembly, monomer. The cofactor is Mg(2+).

Its subcellular location is the cytoplasm. The protein resides in the nucleus. It catalyses the reaction 5-methylsulfanyl-2,3-dioxopentyl phosphate + H2O = 1,2-dihydroxy-5-(methylsulfanyl)pent-1-en-3-one + phosphate. It functions in the pathway amino-acid biosynthesis; L-methionine biosynthesis via salvage pathway; L-methionine from S-methyl-5-thio-alpha-D-ribose 1-phosphate: step 3/6. Its pathway is amino-acid biosynthesis; L-methionine biosynthesis via salvage pathway; L-methionine from S-methyl-5-thio-alpha-D-ribose 1-phosphate: step 4/6. Functionally, bifunctional enzyme that catalyzes the enolization of 2,3-diketo-5-methylthiopentyl-1-phosphate (DK-MTP-1-P) into the intermediate 2-hydroxy-3-keto-5-methylthiopentenyl-1-phosphate (HK-MTPenyl-1-P), which is then dephosphorylated to form the acireductone 1,2-dihydroxy-3-keto-5-methylthiopentene (DHK-MTPene). The protein is Enolase-phosphatase E1 (utr4) of Neurospora crassa (strain ATCC 24698 / 74-OR23-1A / CBS 708.71 / DSM 1257 / FGSC 987).